Reading from the N-terminus, the 551-residue chain is Probable NADH-ubiquinone oxidoreductase C947.15c, mitochondrial (551 aa).

The N-terminal 35 residues, methionine 1–lysine 35, are a transit peptide targeting the mitochondrion. Asparagine 92–arginine 122 serves as a coordination point for FAD. Residue leucine 255–aspartate 291 participates in NAD(+) binding.

Belongs to the NADH dehydrogenase family.

The protein localises to the mitochondrion. The enzyme catalyses a quinone + NADH + H(+) = a quinol + NAD(+). The catalysed reaction is a ubiquinone + NADH + H(+) = a ubiquinol + NAD(+). In terms of biological role, catalyzes the oxidation of NADH. The polypeptide is Probable NADH-ubiquinone oxidoreductase C947.15c, mitochondrial (Schizosaccharomyces pombe (strain 972 / ATCC 24843) (Fission yeast)).